The primary structure comprises 358 residues: Serine/threonine-protein phosphatase 2A activator 2 (358 aa).

Belongs to the PTPA-type PPIase family.

The protein resides in the cytoplasm. It carries out the reaction [protein]-peptidylproline (omega=180) = [protein]-peptidylproline (omega=0). PPIases accelerate the folding of proteins. It catalyzes the cis-trans isomerization of proline imidic peptide bonds in oligopeptides. Acts as a regulatory subunit for PP2A-like phosphatases modulating their activity or substrate specificity, probably by inducing a conformational change in the catalytic subunit, a direct target of the PPIase. Can reactivate inactive phosphatase PP2A-phosphatase methylesterase complexes (PP2Ai) in presence of ATP and Mg(2+) by dissociating the inactive form from the complex. The sequence is that of Serine/threonine-protein phosphatase 2A activator 2 (RRD2) from Candida glabrata (strain ATCC 2001 / BCRC 20586 / JCM 3761 / NBRC 0622 / NRRL Y-65 / CBS 138) (Yeast).